A 258-amino-acid chain; its full sequence is UPF0246 protein IL2146 (258 aa).

Belongs to the UPF0246 family.

This Idiomarina loihiensis (strain ATCC BAA-735 / DSM 15497 / L2-TR) protein is UPF0246 protein IL2146.